A 407-amino-acid chain; its full sequence is Multifunctional CCA protein (407 aa).

The ATP site is built by Gly-8 and Arg-11. 2 residues coordinate CTP: Gly-8 and Arg-11. Positions 21 and 23 each coordinate Mg(2+). Positions 91, 137, and 140 each coordinate ATP. Residues Arg-91, Arg-137, and Arg-140 each coordinate CTP. Positions 228–329 (TGIHTLMVAQ…IKIFDKMDVW (102 aa)) constitute an HD domain.

Belongs to the tRNA nucleotidyltransferase/poly(A) polymerase family. Bacterial CCA-adding enzyme type 1 subfamily. In terms of assembly, monomer. Can also form homodimers and oligomers. Mg(2+) serves as cofactor. Requires Ni(2+) as cofactor.

The catalysed reaction is a tRNA precursor + 2 CTP + ATP = a tRNA with a 3' CCA end + 3 diphosphate. It carries out the reaction a tRNA with a 3' CCA end + 2 CTP + ATP = a tRNA with a 3' CCACCA end + 3 diphosphate. Functionally, catalyzes the addition and repair of the essential 3'-terminal CCA sequence in tRNAs without using a nucleic acid template. Adds these three nucleotides in the order of C, C, and A to the tRNA nucleotide-73, using CTP and ATP as substrates and producing inorganic pyrophosphate. tRNA 3'-terminal CCA addition is required both for tRNA processing and repair. Also involved in tRNA surveillance by mediating tandem CCA addition to generate a CCACCA at the 3' terminus of unstable tRNAs. While stable tRNAs receive only 3'-terminal CCA, unstable tRNAs are marked with CCACCA and rapidly degraded. This chain is Multifunctional CCA protein, found in Aliivibrio fischeri (strain ATCC 700601 / ES114) (Vibrio fischeri).